An 874-amino-acid chain; its full sequence is Alanine--tRNA ligase (874 aa).

Residues H562, H566, C664, and H668 each contribute to the Zn(2+) site.

The protein belongs to the class-II aminoacyl-tRNA synthetase family. The cofactor is Zn(2+).

The protein resides in the cytoplasm. It carries out the reaction tRNA(Ala) + L-alanine + ATP = L-alanyl-tRNA(Ala) + AMP + diphosphate. Functionally, catalyzes the attachment of alanine to tRNA(Ala) in a two-step reaction: alanine is first activated by ATP to form Ala-AMP and then transferred to the acceptor end of tRNA(Ala). Also edits incorrectly charged Ser-tRNA(Ala) and Gly-tRNA(Ala) via its editing domain. The sequence is that of Alanine--tRNA ligase from Shewanella denitrificans (strain OS217 / ATCC BAA-1090 / DSM 15013).